The following is a 310-amino-acid chain: Protein N-terminal asparagine amidohydrolase (310 aa).

As to quaternary structure, monomer.

It is found in the cytoplasm. It catalyses the reaction N-terminal L-asparaginyl-[protein] + H2O + H(+) = N-terminal L-aspartyl-[protein] + NH4(+). N-terminal asparagine deamidase that mediates deamidation of N-terminal asparagine residues to aspartate. Required for the ubiquitin-dependent turnover of intracellular proteins that initiate with Met-Asn. These proteins are acetylated on the retained initiator methionine and can subsequently be modified by the removal of N-acetyl methionine by acylaminoacid hydrolase (AAH). Conversion of the resulting N-terminal asparagine to aspartate by NTAN1/PNAD renders the protein susceptible to arginylation, polyubiquitination and degradation as specified by the N-end rule. This enzyme does not act on substrates with internal or C-terminal asparagines and does not act on glutamine residues in any position. The protein is Protein N-terminal asparagine amidohydrolase of Mus musculus (Mouse).